The primary structure comprises 393 residues: MLVLGSLRSALSCSSTASLISKRNPCYPYGILCRTLSQSVKLWQENTSKDDSSLNITPRLLKIIPNDTDIVTLEKQDELIKRRRKLSKEVTQMKRLKPVSPGLRWYRSPIYPYLYKGRPVRALTVVRKKHGGRNNSGKITVRHQGGGHRNRTRLIDFNRWEGGAQTVQRIEYDPGRSSHIALLKHNTTGELSYIIACDGLRPGDVVESFRRGIPQTLLNEMGGKVDPAILSVKTTQRGNCLPISMIPIGTIIHNVGITPVGPGKFCRSAGTYARVLAKLPEKKKAIVRLQSGEHRYVSLEAVATIGVVSNIDHQNRSLGKAGRSRWLGIRPTVRGVAMNKCDHPHGGGRGKSKSNKLSMSPWGQLAKGYKTRRGKNQNRMKVKDRPRGKDARL.

The transit peptide at 1–43 (MLVLGSLRSALSCSSTASLISKRNPCYPYGILCRTLSQSVKLW) directs the protein to the mitochondrion. The disordered stretch occupies residues 337-393 (AMNKCDHPHGGGRGKSKSNKLSMSPWGQLAKGYKTRRGKNQNRMKVKDRPRGKDARL). A compositionally biased stretch (basic residues) spans 369–380 (YKTRRGKNQNRM). The span at 381–393 (KVKDRPRGKDARL) shows a compositional bias: basic and acidic residues.

It belongs to the universal ribosomal protein uL2 family. As to quaternary structure, component of the mitochondrial large ribosomal subunit (mt-LSU). Mature yeast 74S mitochondrial ribosomes consist of a small (37S) and a large (54S) subunit. The 37S small subunit contains a 15S ribosomal RNA (15S mt-rRNA) and 34 different proteins. The 54S large subunit contains a 21S rRNA (21S mt-rRNA) and 46 different proteins. uL2m has a Na/K ligand binding site.

It is found in the mitochondrion. Its function is as follows. Component of the mitochondrial ribosome (mitoribosome), a dedicated translation machinery responsible for the synthesis of mitochondrial genome-encoded proteins, including at least some of the essential transmembrane subunits of the mitochondrial respiratory chain. The mitoribosomes are attached to the mitochondrial inner membrane and translation products are cotranslationally integrated into the membrane. The protein is Large ribosomal subunit protein uL2m (RML2) of Saccharomyces cerevisiae (strain ATCC 204508 / S288c) (Baker's yeast).